The following is a 196-amino-acid chain: Ribonuclease HII (196 aa).

The RNase H type-2 domain occupies 9 to 196 (SLIAGVDEVG…APVKRAIGLK (188 aa)). Residues aspartate 15, glutamate 16, and aspartate 107 each coordinate a divalent metal cation.

Belongs to the RNase HII family. Requires Mn(2+) as cofactor. Mg(2+) is required as a cofactor.

It is found in the cytoplasm. It catalyses the reaction Endonucleolytic cleavage to 5'-phosphomonoester.. Endonuclease that specifically degrades the RNA of RNA-DNA hybrids. In Photorhabdus laumondii subsp. laumondii (strain DSM 15139 / CIP 105565 / TT01) (Photorhabdus luminescens subsp. laumondii), this protein is Ribonuclease HII.